The primary structure comprises 418 residues: Phosphoglycerate kinase (418 aa).

Positions 23, 24, 25, 26, 39, 40, 63, 64, 66, 67, 122, 123, 170, and 171 each coordinate (2R)-3-phosphoglycerate. Glycine 214 is a binding site for ADP. Glycine 214 is a binding site for CDP. Residues alanine 215 and lysine 216 each contribute to the AMP site. An ATP-binding site is contributed by alanine 215. Residue alanine 215 participates in Mg(2+) binding. Aspartate 219 contributes to the CDP binding site. Aspartate 219 serves as a coordination point for Mg(2+). Lysine 220 serves as a coordination point for AMP. Lysine 220 contributes to the ATP binding site. Glycine 238 contacts ADP. A CDP-binding site is contributed by glycine 238. The AMP site is built by glycine 239 and glycine 313. Positions 239 and 313 each coordinate ATP. Glycine 338, alanine 340, and phenylalanine 343 together coordinate CDP. Phenylalanine 343 is a binding site for ADP. Glutamate 344 contacts AMP. Residues glutamate 344, aspartate 375, and threonine 376 each contribute to the ATP site. Aspartate 375 is a Mg(2+) binding site.

This sequence belongs to the phosphoglycerate kinase family. Monomer. It depends on Mg(2+) as a cofactor.

The protein localises to the cytoplasm. The protein resides in the mitochondrion. The catalysed reaction is (2R)-3-phosphoglycerate + ATP = (2R)-3-phospho-glyceroyl phosphate + ADP. The protein operates within carbohydrate degradation; glycolysis; pyruvate from D-glyceraldehyde 3-phosphate: step 2/5. Functionally, catalyzes one of the two ATP producing reactions in the glycolytic pathway via the reversible conversion of 1,3-diphosphoglycerate to 3-phosphoglycerate. Both L- and D- forms of purine and pyrimidine nucleotides can be used as substrates, but the activity is much lower on pyrimidines. Negatively regulates the biosynthesis of acetyl-CoA from pyruvate in the mitochondrion. The polypeptide is Phosphoglycerate kinase (pgk-1) (Neurospora crassa (strain ATCC 24698 / 74-OR23-1A / CBS 708.71 / DSM 1257 / FGSC 987)).